A 589-amino-acid polypeptide reads, in one-letter code: tRNA (guanine(26)-N(2))-dimethyltransferase 2 (589 aa).

The region spanning 9–465 is the Trm1 methyltransferase domain; it reads TVIKEGEAEI…APMEVIWDIM (457 aa). S-adenosyl-L-methionine is bound at residue R36. The tract at residues 51–122 is disordered; the sequence is KQEHEAKSSK…RFAPREPKPP (72 aa). Basic and acidic residues-rich tracts occupy residues 68–81 and 106–122; these read VIEK…KEET and DPAK…PKPP. 3 residues coordinate S-adenosyl-L-methionine: R134, D152, and V185. Positions 315, 318, 350, and 353 each coordinate Zn(2+). The interval 550–589 is disordered; the sequence is LSQHHEELKEEDEEAEPEDNVQDKVDPKRQKTATDNITST. The segment covering 558–569 has biased composition (acidic residues); the sequence is KEEDEEAEPEDN.

The protein belongs to the class I-like SAM-binding methyltransferase superfamily. Trm1 family.

It catalyses the reaction guanosine(26) in tRNA + 2 S-adenosyl-L-methionine = N(2)-dimethylguanosine(26) in tRNA + 2 S-adenosyl-L-homocysteine + 2 H(+). Dimethylates a single guanine residue at position 26 of most tRNAs using S-adenosyl-L-methionine as donor of the methyl groups. This Arabidopsis thaliana (Mouse-ear cress) protein is tRNA (guanine(26)-N(2))-dimethyltransferase 2.